A 148-amino-acid polypeptide reads, in one-letter code: Large ribosomal subunit protein uL15 (148 aa).

Positions Met-1–Leu-57 are disordered. Residues Lys-10–Gly-20 are compositionally biased toward basic residues. Residues Ile-23–Met-35 are compositionally biased toward gly residues.

This sequence belongs to the universal ribosomal protein uL15 family. Part of the 50S ribosomal subunit.

Functionally, binds to the 23S rRNA. The polypeptide is Large ribosomal subunit protein uL15 (Nostoc sp. (strain PCC 7120 / SAG 25.82 / UTEX 2576)).